Here is a 223-residue protein sequence, read N- to C-terminus: Protein Wnt-1 (223 aa).

Disulfide bonds link C7–C24, C72–C86, and C74–C81. S78 carries O-palmitoleoyl serine; by PORCN lipidation. Positions 110-135 (VTMRNDGSPSDRETESSFVPYNPSHK) are disordered. Residues 125 to 135 (SSFVPYNPSHK) show a composition bias toward polar residues. Intrachain disulfides connect C152–C183, C168–C178, C182–C222, C198–C213, C200–C210, and C205–C206. N-linked (GlcNAc...) asparagine glycosylation occurs at N169.

This sequence belongs to the Wnt family. In terms of processing, palmitoleoylation is required for efficient binding to frizzled receptors. Palmitoleoylation is necessary for proper trafficking to cell surface. Depalmitoleoylated by NOTUM, leading to inhibit Wnt signaling pathway.

Its subcellular location is the secreted. The protein resides in the extracellular space. It localises to the extracellular matrix. Its function is as follows. Ligand for members of the frizzled family of seven transmembrane receptors. Probable developmental protein. The protein is Protein Wnt-1 (WNT-1) of Strongylocentrotus purpuratus (Purple sea urchin).